The primary structure comprises 181 residues: Mitochondrial inner membrane protein Mpv17 (181 aa).

4 helical membrane passes run 20–37 (MCIA…AQYL), 51–67 (FSFL…FIWF), 86–103 (LCID…AILF), and 152–169 (VILN…LSYI).

The protein belongs to the peroxisomal membrane protein PXMP2/4 family.

It localises to the mitochondrion inner membrane. Functionally, involved in mitochondria homeostasis. The chain is Mitochondrial inner membrane protein Mpv17 from Caenorhabditis elegans.